A 337-amino-acid polypeptide reads, in one-letter code: Phosphate acyltransferase (337 aa).

It belongs to the PlsX family. Homodimer. Probably interacts with PlsY.

It localises to the cytoplasm. It carries out the reaction a fatty acyl-[ACP] + phosphate = an acyl phosphate + holo-[ACP]. The protein operates within lipid metabolism; phospholipid metabolism. Functionally, catalyzes the reversible formation of acyl-phosphate (acyl-PO(4)) from acyl-[acyl-carrier-protein] (acyl-ACP). This enzyme utilizes acyl-ACP as fatty acyl donor, but not acyl-CoA. This Polynucleobacter necessarius subsp. necessarius (strain STIR1) protein is Phosphate acyltransferase.